A 1981-amino-acid chain; its full sequence is Nonribosomal peptide synthetase rstn8 (1981 aa).

Residues S251–S638 are adenylation. The Carrier 1 domain occupies H763 to P840. Position 800 is an O-(pantetheine 4'-phosphoryl)serine (S800). The condensation 1 stretch occupies residues E883–Q1293. The Carrier 2 domain maps to E1438–P1514. Residue S1475 is modified to O-(pantetheine 4'-phosphoryl)serine. The tract at residues E1586 to I1978 is condensation 1. The tract at residues H1754–R1774 is disordered.

This sequence belongs to the NRP synthetase family. The cofactor is pantetheine 4'-phosphate.

It carries out the reaction 2 L-tryptophan = cyclo(L-Trp-L-Trp) + 2 H2O. It functions in the pathway alkaloid biosynthesis. In terms of biological role, nonribosomal peptide synthetase; part of the gene cluster that mediates the biosynthesis of okaramine B, a prenylated indole alkaloid that possesses an unusual octacyclic ring system, including a four-membered azetidine ring and an eight-membered azocine ring, and that exhibits insecticidal activity against silkworm larvae. Within the pathway, okaA acts as a bimodular non-ribosomal peptide synthetase (NRPS) that condenses two tryptophan molecules into cyclo(L-Trp-L-Trp). Prenylation by the prenyltransferase okaC then leads to the formation of cyclo(N8-(alpha,alpha-dimethylallyl)-L-Trp-6a-(alpha,alpha-dime-thylallyl)-L-Trp). This is followed by indole 2,3-epoxidation by the FAD-dependent monooxygenase okaB to facilitate the formation of the hexahydropyrrolo[2,3-b]indole (HPI) moiety of okaramine C. The cytochrome P450 monooxygenase okaD then likely catalyzes formation of the eight-membered ring of okaramine A. The dioxygenase okaE further forms the unusual 2-dimethyl-3-methyl-azetidine ring to yield 12-deshydroxyl okaramine E, as well as the hydroxylation of 12-deshydroxyl okaramine E to produce okaramine E. The cytochrome P450 monoxygenase okaG converts 12-deshydroxyl okaramine E into 3-desmethyl okaramine B which is further methylated by the methyltransferase okaF into okaramine B. In a shunt pathway, okaG and okaF together are also able to convert okaramine E into okaramine D. Okaramine H is produced by nonenzymatic conversion from okaramine A. This chain is Nonribosomal peptide synthetase rstn8, found in Penicillium ochrochloron.